Consider the following 452-residue polypeptide: Bifunctional protein GlmU (452 aa).

The interval 1 to 232 is pyrophosphorylase; sequence MTTNAPGAVI…EADMQGVNSR (232 aa). Residues 11–14, Lys25, Gln78, and 83–84 each bind UDP-N-acetyl-alpha-D-glucosamine; these read LAAG and GT. Mg(2+) is bound at residue Asp108. The UDP-N-acetyl-alpha-D-glucosamine site is built by Gly144, Glu158, and Asn230. Position 230 (Asn230) interacts with Mg(2+). Residues 233-253 form a linker region; it reads ADLAAAEATMQQRLRMAAMAG. Residues 254-452 form an N-acetyltransferase region; the sequence is GVTMLDPSSV…HKDKKKASGE (199 aa). The UDP-N-acetyl-alpha-D-glucosamine site is built by Arg319 and Lys337. Catalysis depends on His349, which acts as the Proton acceptor. Residues Tyr352 and Asn363 each contribute to the UDP-N-acetyl-alpha-D-glucosamine site. Residues Ala366, 372–373, Ser391, Ser409, and Arg426 contribute to the acetyl-CoA site; that span reads NY.

In the N-terminal section; belongs to the N-acetylglucosamine-1-phosphate uridyltransferase family. This sequence in the C-terminal section; belongs to the transferase hexapeptide repeat family. As to quaternary structure, homotrimer. Requires Mg(2+) as cofactor.

The protein localises to the cytoplasm. It carries out the reaction alpha-D-glucosamine 1-phosphate + acetyl-CoA = N-acetyl-alpha-D-glucosamine 1-phosphate + CoA + H(+). The enzyme catalyses N-acetyl-alpha-D-glucosamine 1-phosphate + UTP + H(+) = UDP-N-acetyl-alpha-D-glucosamine + diphosphate. The protein operates within nucleotide-sugar biosynthesis; UDP-N-acetyl-alpha-D-glucosamine biosynthesis; N-acetyl-alpha-D-glucosamine 1-phosphate from alpha-D-glucosamine 6-phosphate (route II): step 2/2. Its pathway is nucleotide-sugar biosynthesis; UDP-N-acetyl-alpha-D-glucosamine biosynthesis; UDP-N-acetyl-alpha-D-glucosamine from N-acetyl-alpha-D-glucosamine 1-phosphate: step 1/1. It functions in the pathway bacterial outer membrane biogenesis; LPS lipid A biosynthesis. Catalyzes the last two sequential reactions in the de novo biosynthetic pathway for UDP-N-acetylglucosamine (UDP-GlcNAc). The C-terminal domain catalyzes the transfer of acetyl group from acetyl coenzyme A to glucosamine-1-phosphate (GlcN-1-P) to produce N-acetylglucosamine-1-phosphate (GlcNAc-1-P), which is converted into UDP-GlcNAc by the transfer of uridine 5-monophosphate (from uridine 5-triphosphate), a reaction catalyzed by the N-terminal domain. The sequence is that of Bifunctional protein GlmU from Parvibaculum lavamentivorans (strain DS-1 / DSM 13023 / NCIMB 13966).